Consider the following 172-residue polypeptide: Ribosome maturation factor RimM (172 aa).

In terms of domain architecture, PRC barrel spans glutamate 96–leucine 168.

The protein belongs to the RimM family. In terms of assembly, binds ribosomal protein uS19.

Its subcellular location is the cytoplasm. Its function is as follows. An accessory protein needed during the final step in the assembly of 30S ribosomal subunit, possibly for assembly of the head region. Essential for efficient processing of 16S rRNA. May be needed both before and after RbfA during the maturation of 16S rRNA. It has affinity for free ribosomal 30S subunits but not for 70S ribosomes. This chain is Ribosome maturation factor RimM, found in Streptococcus pyogenes serotype M3 (strain ATCC BAA-595 / MGAS315).